The primary structure comprises 231 residues: Phosphoribosylformylglycinamidine synthase subunit PurQ (231 aa).

In terms of domain architecture, Glutamine amidotransferase type-1 spans 3–231 (FGVLIFPGSN…ESMVGAMAKR (229 aa)). The active-site Nucleophile is the cysteine 86. Catalysis depends on residues histidine 203 and glutamate 205.

Part of the FGAM synthase complex composed of 1 PurL, 1 PurQ and 2 PurS subunits.

It is found in the cytoplasm. The enzyme catalyses N(2)-formyl-N(1)-(5-phospho-beta-D-ribosyl)glycinamide + L-glutamine + ATP + H2O = 2-formamido-N(1)-(5-O-phospho-beta-D-ribosyl)acetamidine + L-glutamate + ADP + phosphate + H(+). It carries out the reaction L-glutamine + H2O = L-glutamate + NH4(+). The protein operates within purine metabolism; IMP biosynthesis via de novo pathway; 5-amino-1-(5-phospho-D-ribosyl)imidazole from N(2)-formyl-N(1)-(5-phospho-D-ribosyl)glycinamide: step 1/2. Its function is as follows. Part of the phosphoribosylformylglycinamidine synthase complex involved in the purines biosynthetic pathway. Catalyzes the ATP-dependent conversion of formylglycinamide ribonucleotide (FGAR) and glutamine to yield formylglycinamidine ribonucleotide (FGAM) and glutamate. The FGAM synthase complex is composed of three subunits. PurQ produces an ammonia molecule by converting glutamine to glutamate. PurL transfers the ammonia molecule to FGAR to form FGAM in an ATP-dependent manner. PurS interacts with PurQ and PurL and is thought to assist in the transfer of the ammonia molecule from PurQ to PurL. The polypeptide is Phosphoribosylformylglycinamidine synthase subunit PurQ (Koribacter versatilis (strain Ellin345)).